Reading from the N-terminus, the 486-residue chain is Putative ankyrin repeat protein R634 (486 aa).

12 ANK repeats span residues 84–113 (DLFK…NVRE), 114–143 (HNDV…DLYA), 145–173 (KNTL…NFRE), 174–203 (NCDT…DVNS), 205–233 (SHKS…NIDW), 234–263 (RHNY…NLEI), 265–293 (DGCI…EIGF), 307–336 (NKIT…ATIK), 337–366 (EKNY…SLEK), 367–396 (KINK…NVKT), 398–426 (EGLP…DVTS), and 427–456 (YDNY…NVND).

The protein is Putative ankyrin repeat protein R634 of Acanthamoeba polyphaga (Amoeba).